Here is a 110-residue protein sequence, read N- to C-terminus: Small ubiquitin-related modifier 3 (110 aa).

Glycyl lysine isopeptide (Lys-Gly) (interchain with G-Cter in SUMO2) cross-links involve residues K5 and K7. K11 is covalently cross-linked (Glycyl lysine isopeptide (Lys-Gly) (interchain with G-Cter in SUMO); alternate). A Glycyl lysine isopeptide (Lys-Gly) (interchain with G-Cter in SUMO2); alternate cross-link involves residue K11. The Ubiquitin-like domain maps to 15–92; it reads DHINLKVAGQ…IDVFQQQTGG (78 aa). The span at 89–101 shows a compositional bias: polar residues; sequence QTGGTASRASVPT. The tract at residues 89 to 110 is disordered; sequence QTGGTASRASVPTPSHFPDICY. G92 is covalently cross-linked (Glycyl lysine isopeptide (Gly-Lys) (interchain with K-? in acceptor proteins)). Residues 93 to 110 constitute a propeptide that is removed on maturation; the sequence is TASRASVPTPSHFPDICY.

It belongs to the ubiquitin family. SUMO subfamily. As to quaternary structure, interacts with SAE2 and UBE2I. Covalently attached to a number of proteins. Interacts with USP25 (via ts SIM domain); the interaction sumoylates USP25 and inhibits its ubiquitin hydrolyzing activity. Interacts with BMAL1. Post-translationally, polymeric chains can be formed through Lys-11 cross-linking. In terms of processing, cleavage of precursor form by SENP1, SENP2 or SENP5 is necessary for function.

Its subcellular location is the cytoplasm. It localises to the nucleus. The protein localises to the PML body. In terms of biological role, ubiquitin-like protein which can be covalently attached to target lysines either as a monomer or as a lysine-linked polymer. Does not seem to be involved in protein degradation and may function as an antagonist of ubiquitin in the degradation process. Plays a role in a number of cellular processes such as nuclear transport, DNA replication and repair, mitosis and signal transduction. Covalent attachment to its substrates requires prior activation by the E1 complex SAE1-SAE2 and linkage to the E2 enzyme UBE2I, and can be promoted by an E3 ligase such as PIAS1-4, RANBP2 or CBX4. Plays a role in the regulation of sumoylation status of SETX. The polypeptide is Small ubiquitin-related modifier 3 (Sumo3) (Rattus norvegicus (Rat)).